Here is a 346-residue protein sequence, read N- to C-terminus: S-adenosylmethionine:tRNA ribosyltransferase-isomerase (346 aa).

This sequence belongs to the QueA family. Monomer.

Its subcellular location is the cytoplasm. The enzyme catalyses 7-aminomethyl-7-carbaguanosine(34) in tRNA + S-adenosyl-L-methionine = epoxyqueuosine(34) in tRNA + adenine + L-methionine + 2 H(+). Its pathway is tRNA modification; tRNA-queuosine biosynthesis. In terms of biological role, transfers and isomerizes the ribose moiety from AdoMet to the 7-aminomethyl group of 7-deazaguanine (preQ1-tRNA) to give epoxyqueuosine (oQ-tRNA). The polypeptide is S-adenosylmethionine:tRNA ribosyltransferase-isomerase (Neisseria gonorrhoeae (strain ATCC 700825 / FA 1090)).